A 334-amino-acid chain; its full sequence is GTPase Obg (334 aa).

The Obg domain occupies methionine 1–methionine 159. Residues alanine 160–leucine 332 form the OBG-type G domain. GTP is bound by residues glycine 166–serine 173, phenylalanine 191–histidine 195, aspartate 212–glycine 215, asparagine 282–aspartate 285, and serine 313–leucine 315. The Mg(2+) site is built by serine 173 and threonine 193.

This sequence belongs to the TRAFAC class OBG-HflX-like GTPase superfamily. OBG GTPase family. As to quaternary structure, monomer. The cofactor is Mg(2+).

It localises to the cytoplasm. In terms of biological role, an essential GTPase which binds GTP, GDP and possibly (p)ppGpp with moderate affinity, with high nucleotide exchange rates and a fairly low GTP hydrolysis rate. Plays a role in control of the cell cycle, stress response, ribosome biogenesis and in those bacteria that undergo differentiation, in morphogenesis control. This chain is GTPase Obg, found in Vesicomyosocius okutanii subsp. Calyptogena okutanii (strain HA).